A 264-amino-acid chain; its full sequence is Thymidylate synthase (264 aa).

Arginine 21 serves as a coordination point for dUMP. Histidine 51 contacts (6R)-5,10-methylene-5,6,7,8-tetrahydrofolate. DUMP is bound at residue 126–127; the sequence is RR. The Nucleophile role is filled by cysteine 146. DUMP is bound by residues 166-169, asparagine 177, and 207-209; these read RSCD and HLY. Aspartate 169 lines the (6R)-5,10-methylene-5,6,7,8-tetrahydrofolate pocket. (6R)-5,10-methylene-5,6,7,8-tetrahydrofolate is bound at residue alanine 263.

The protein belongs to the thymidylate synthase family. Bacterial-type ThyA subfamily. In terms of assembly, homodimer.

Its subcellular location is the cytoplasm. It catalyses the reaction dUMP + (6R)-5,10-methylene-5,6,7,8-tetrahydrofolate = 7,8-dihydrofolate + dTMP. It participates in pyrimidine metabolism; dTTP biosynthesis. Its function is as follows. Catalyzes the reductive methylation of 2'-deoxyuridine-5'-monophosphate (dUMP) to 2'-deoxythymidine-5'-monophosphate (dTMP) while utilizing 5,10-methylenetetrahydrofolate (mTHF) as the methyl donor and reductant in the reaction, yielding dihydrofolate (DHF) as a by-product. This enzymatic reaction provides an intracellular de novo source of dTMP, an essential precursor for DNA biosynthesis. The chain is Thymidylate synthase from Shewanella putrefaciens (strain CN-32 / ATCC BAA-453).